Reading from the N-terminus, the 324-residue chain is Acetyl-coenzyme A carboxylase carboxyl transferase subunit alpha (324 aa).

The region spanning 37-291 is the CoA carboxyltransferase C-terminal domain; the sequence is KLERRLDKLK…QNFILQEWLR (255 aa).

The protein belongs to the AccA family. As to quaternary structure, acetyl-CoA carboxylase is a heterohexamer composed of biotin carboxyl carrier protein (AccB), biotin carboxylase (AccC) and two subunits each of ACCase subunit alpha (AccA) and ACCase subunit beta (AccD).

Its subcellular location is the cytoplasm. It catalyses the reaction N(6)-carboxybiotinyl-L-lysyl-[protein] + acetyl-CoA = N(6)-biotinyl-L-lysyl-[protein] + malonyl-CoA. It functions in the pathway lipid metabolism; malonyl-CoA biosynthesis; malonyl-CoA from acetyl-CoA: step 1/1. Functionally, component of the acetyl coenzyme A carboxylase (ACC) complex. First, biotin carboxylase catalyzes the carboxylation of biotin on its carrier protein (BCCP) and then the CO(2) group is transferred by the carboxyltransferase to acetyl-CoA to form malonyl-CoA. The polypeptide is Acetyl-coenzyme A carboxylase carboxyl transferase subunit alpha (Chlamydia caviae (strain ATCC VR-813 / DSM 19441 / 03DC25 / GPIC) (Chlamydophila caviae)).